Consider the following 59-residue polypeptide: Antibacterial peptide enbocin (59 aa).

A signal peptide spans 1–20 (MNFTRIIFFLFVVVFATASG). A propeptide is located at residue lysine 21. A Serine amide modification is found at serine 58.

It belongs to the cecropin family.

It localises to the secreted. Has antibacterial activity against Gram-positive and Gram-negative bacteria. This Bombyx mori (Silk moth) protein is Antibacterial peptide enbocin.